Reading from the N-terminus, the 255-residue chain is Indole-3-glycerol phosphate synthase (255 aa).

The protein belongs to the TrpC family.

It carries out the reaction 1-(2-carboxyphenylamino)-1-deoxy-D-ribulose 5-phosphate + H(+) = (1S,2R)-1-C-(indol-3-yl)glycerol 3-phosphate + CO2 + H2O. It functions in the pathway amino-acid biosynthesis; L-tryptophan biosynthesis; L-tryptophan from chorismate: step 4/5. The protein is Indole-3-glycerol phosphate synthase of Streptococcus pneumoniae (strain Taiwan19F-14).